The chain runs to 474 residues: PRAME family member 2 (474 aa).

One copy of the LRR 1; degenerate repeat lies at Arg-97 to Cys-124. Residues His-179–Tyr-203 form an LRR 2; degenerate repeat. The stretch at Ile-204–Glu-230 is one LRR 3; degenerate repeat. An LRR 4; degenerate repeat occupies Met-231–Arg-265. LRR repeat units lie at residues Leu-266–Leu-291, Gln-292–Lys-323, His-324–Ala-342, Ala-348–Cys-375, and Cys-376–His-400.

This sequence belongs to the PRAME family.

This Homo sapiens (Human) protein is PRAME family member 2.